The following is a 503-amino-acid chain: Inosine-5'-monophosphate dehydrogenase 1 (503 aa).

Serine 2 is modified (N-acetylserine). In terms of domain architecture, CBS spans 167-225 (MKSCDSSDYCVPWEIDFEKLEFVLEDKQKGFVVLERDGETVNVVTKDDIQRVKGYPKSG). Residues 265–267 (DSS) and 315–317 (GMG) contribute to the NAD(+) site. K(+)-binding residues include glycine 317 and glycine 319. Serine 320 lines the IMP pocket. Position 322 (cysteine 322) interacts with K(+). Cysteine 322 serves as the catalytic Thioimidate intermediate. IMP-binding positions include 355–357 (DGG), 378–379 (GS), and 402–406 (YRGMG). Catalysis depends on arginine 418, which acts as the Proton acceptor. Residue glutamine 430 coordinates IMP. K(+) contacts are provided by glutamate 489, glycine 490, and glycine 491.

It belongs to the IMPDH/GMPR family. In terms of assembly, homotetramer. K(+) serves as cofactor.

The protein resides in the cytoplasm. The enzyme catalyses IMP + NAD(+) + H2O = XMP + NADH + H(+). The protein operates within purine metabolism; XMP biosynthesis via de novo pathway; XMP from IMP: step 1/1. Mycophenolic acid (MPA) is a non-competitive inhibitor that prevents formation of the closed enzyme conformation by binding to the same site as the amobile flap. In contrast, mizoribine monophosphate (MZP) is a competitive inhibitor that induces the closed conformation. MPA is a potent inhibitor of mammalian IMPDHs but a poor inhibitor of the bacterial enzymes. MZP is a more potent inhibitor of bacterial IMPDH. Catalyzes the conversion of inosine 5'-phosphate (IMP) to xanthosine 5'-phosphate (XMP), the first committed and rate-limiting step in the de novo synthesis of guanine nucleotides, and therefore plays an important role in the regulation of cell growth. This chain is Inosine-5'-monophosphate dehydrogenase 1, found in Arabidopsis thaliana (Mouse-ear cress).